Consider the following 355-residue polypeptide: Galectin-9 (355 aa).

Galectin domains are found at residues Phe-17–Gln-148 and Phe-227–Thr-355. Residues Asn-48, His-61, Arg-65, Asn-75, Trp-82–Lys-88, His-267, Arg-271, Thr-281, and Trp-287–Ser-293 contribute to the a beta-D-galactoside site.

In terms of assembly, monomer. In terms of tissue distribution, peripheral blood leukocytes and lymphatic tissues. Expressed in lung, liver, breast and kidney with higher levels in tumor endothelial cells than normal endothelium (at protein level). Expressed in trophoblast cells in decidua and placenta in pregnancy (at protein level). Isoform 2 is the most abundant isoform expressed in endothelial cells. Upon endothelial cell activation isoform 2 expression decreases while expression of isoform 3 and isoform 5 increases. Isoform 4 decreases in pathological pregnancy.

It is found in the cytoplasm. The protein localises to the nucleus. The protein resides in the secreted. Functionally, binds galactosides. Has high affinity for the Forssman pentasaccharide. Ligand for HAVCR2/TIM3. Binding to HAVCR2 induces T-helper type 1 lymphocyte (Th1) death. Also stimulates bactericidal activity in infected macrophages by causing macrophage activation and IL1B secretion which restricts intracellular bacterial growth. Ligand for P4HB; the interaction retains P4HB at the cell surface of Th2 T-helper cells, increasing disulfide reductase activity at the plasma membrane, altering the plasma membrane redox state and enhancing cell migration. Ligand for CD44; the interaction enhances binding of SMAD3 to the FOXP3 promoter, leading to up-regulation of FOXP3 expression and increased induced regulatory T (iTreg) cell stability and suppressive function. Promotes ability of mesenchymal stromal cells to suppress T-cell proliferation. Expands regulatory T-cells and induces cytotoxic T-cell apoptosis following virus infection. Activates ERK1/2 phosphorylation inducing cytokine (IL-6, IL-8, IL-12) and chemokine (CCL2) production in mast and dendritic cells. Inhibits degranulation and induces apoptosis of mast cells. Induces maturation and migration of dendritic cells. Inhibits natural killer (NK) cell function. Can transform NK cell phenotype from peripheral to decidual during pregnancy. Astrocyte derived galectin-9 enhances microglial TNF production. May play a role in thymocyte-epithelial interactions relevant to the biology of the thymus. May provide the molecular basis for urate flux across cell membranes, allowing urate that is formed during purine metabolism to efflux from cells and serving as an electrogenic transporter that plays an important role in renal and gastrointestinal urate excretion. Highly selective to the anion urate. Its function is as follows. Acts as an eosinophil chemoattractant. It also inhibits angiogenesis. Suppresses IFNG production by natural killer cells. The polypeptide is Galectin-9 (LGALS9) (Homo sapiens (Human)).